We begin with the raw amino-acid sequence, 408 residues long: LL-diaminopimelate aminotransferase (408 aa).

Residues tyrosine 15 and glycine 42 each contribute to the substrate site. Pyridoxal 5'-phosphate is bound by residues tyrosine 72, 108-109 (SK), tyrosine 132, asparagine 187, tyrosine 218, and 246-248 (SFS). Lysine 109, tyrosine 132, and asparagine 187 together coordinate substrate. At lysine 249 the chain carries N6-(pyridoxal phosphate)lysine. The pyridoxal 5'-phosphate site is built by arginine 257 and asparagine 292. Substrate-binding residues include asparagine 292 and arginine 388.

This sequence belongs to the class-I pyridoxal-phosphate-dependent aminotransferase family. LL-diaminopimelate aminotransferase subfamily. Homodimer. The cofactor is pyridoxal 5'-phosphate.

The catalysed reaction is (2S,6S)-2,6-diaminopimelate + 2-oxoglutarate = (S)-2,3,4,5-tetrahydrodipicolinate + L-glutamate + H2O + H(+). It participates in amino-acid biosynthesis; L-lysine biosynthesis via DAP pathway; LL-2,6-diaminopimelate from (S)-tetrahydrodipicolinate (aminotransferase route): step 1/1. Functionally, involved in the synthesis of meso-diaminopimelate (m-DAP or DL-DAP), required for both lysine and peptidoglycan biosynthesis. Catalyzes the direct conversion of tetrahydrodipicolinate to LL-diaminopimelate. The polypeptide is LL-diaminopimelate aminotransferase (Prochlorococcus marinus (strain MIT 9515)).